Consider the following 665-residue polypeptide: Golgi-associated RAB2B interactor protein 3 (665 aa).

Disordered regions lie at residues 211–240 (EIRG…AGGE), 272–296 (AAAG…GTAG), and 480–590 (SEGY…GSVS). Residues 219-232 (NSRPQSSPTVSEAT) are compositionally biased toward polar residues. Over residues 499–513 (EAKEKRERREKDRTS) the composition is skewed to basic and acidic residues. 2 stretches are compositionally biased toward basic residues: residues 514–538 (SRKS…RKTS) and 554–566 (GHGR…HSSS). Residues 515 to 531 (RKSSHHRRTGMSRHSSK) carry the Bipartite nuclear localization signal motif. Phosphoserine is present on S652.

It belongs to the GARIN family. As to quaternary structure, interacts (via N-terminus) with RAB2B (in GTP-bound form). Interacts with FRG1. As to expression, expressed in adult spermatocytes and spermatids.

Its subcellular location is the golgi apparatus. The protein resides in the nucleus. It localises to the cajal body. In terms of biological role, may be involved in RNA biogenesis. In Mus musculus (Mouse), this protein is Golgi-associated RAB2B interactor protein 3.